Here is a 389-residue protein sequence, read N- to C-terminus: Large envelope protein (389 aa).

Position 1 is an N-acetylmethionine (M1). Residue G2 is the site of N-myristoyl glycine; by host attachment. The pre-S1 stretch occupies residues 2–108 (GQNLSTSNPL…PPLRNTHPQA (107 aa)). The tract at residues 2 to 163 (GQNLSTSNPL…FSRIGDPALN (162 aa)) is pre-S. Residues 2 to 170 (GQNLSTSNPL…ALNMENITSG (169 aa)) are Virion surface; in external conformation-facing. The Intravirion; in internal conformation segment spans residues 2–242 (GQNLSTSNPL…PGYRWMCLRR (241 aa)). Residue N37 is glycosylated (O-linked (GalNAc...) threonine). The segment at 76–103 (TLPANPPPASTNRQSGRQPTPLSPPLRN) is disordered. The span at 85–95 (STNRQSGRQPT) shows a compositional bias: polar residues. Residues 109-163 (MQWNSTTFHQTLQDPRVRGLYFPAGGSSSGTVNPVLTTASPLSSIFSRIGDPALN) are pre-S2. Residues 171-191 (FLGPLLVLQAGFFLLTRILTI) traverse the membrane as a helical segment. Residues 192-242 (PQSLDSWWTSLNFLGGTTVCLGQNSQSPTSNHSPTSCPPTCPGYRWMCLRR) lie on the Intravirion; in external conformation side of the membrane. A helical membrane pass occupies residues 243 to 263 (FIIFLFILLLCLIFLLVLLDY). Over 264-337 (QGMLPVCPLI…WASARFSWLS (74 aa)) the chain is Virion surface. N-linked (GlcNAc...) asparagine; by host glycosylation occurs at N309. The chain crosses the membrane as a helical span at residues 338–358 (LLVPFVQWFVGLSPTVWLSVI). Residues 359 to 364 (WMMWYW) lie on the Intravirion side of the membrane. A helical transmembrane segment spans residues 365–387 (GPSLYSILSPFLPLLPIFFCLWV). Over 388–389 (YI) the chain is Virion surface.

The protein belongs to the orthohepadnavirus major surface antigen family. As to quaternary structure, in its internal form (Li-HBsAg), interacts with the capsid protein and with the isoform S. Interacts with host chaperone CANX. In terms of assembly, associates with host chaperone CANX through its pre-S2 N glycan; this association may be essential for isoform M proper secretion. Interacts with isoform L. Interacts with the antigens of satellite virus HDV (HDVAgs); this interaction is required for encapsidation of HDV genomic RNA. Post-translationally, isoform M is N-terminally acetylated by host at a ratio of 90%, and N-glycosylated by host at the pre-S2 region. Myristoylated.

The protein localises to the virion membrane. The large envelope protein exists in two topological conformations, one which is termed 'external' or Le-HBsAg and the other 'internal' or Li-HBsAg. In its external conformation the protein attaches the virus to cell receptors and thereby initiating infection. This interaction determines the species specificity and liver tropism. This attachment induces virion internalization predominantly through caveolin-mediated endocytosis. The large envelope protein also assures fusion between virion membrane and endosomal membrane. In its internal conformation the protein plays a role in virion morphogenesis and mediates the contact with the nucleocapsid like a matrix protein. Functionally, the middle envelope protein plays an important role in the budding of the virion. It is involved in the induction of budding in a nucleocapsid independent way. In this process the majority of envelope proteins bud to form subviral lipoprotein particles of 22 nm of diameter that do not contain a nucleocapsid. In Homo sapiens (Human), this protein is Large envelope protein.